A 211-amino-acid chain; its full sequence is Succinate dehydrogenase subunit 4, mitochondrial (211 aa).

A mitochondrion-targeting transit peptide spans 1-36 (MASRLLARSKALALALSRADAAAPGPAAGVQWLRTL). Residues 41–64 (RDPAAAASPAPAPRQPAVGSPLGL) are disordered. H166 provides a ligand contact to heme. Y179 is an a ubiquinone binding site. A helical membrane pass occupies residues 188–210 (WVFIYFKILLIIMAKETVVYFDL).

Component of complex II composed of eight subunits in plants: four classical SDH subunits SDH1, SDH2, SDH3 and SDH4 (a flavoprotein (FP), an iron-sulfur protein (IP), and a cytochrome b composed of a large and a small subunit.), as well as four subunits unknown in mitochondria from bacteria and heterotrophic eukaryotes. Heme serves as cofactor.

It localises to the mitochondrion inner membrane. Its pathway is carbohydrate metabolism; tricarboxylic acid cycle. Functionally, membrane-anchoring subunit of succinate dehydrogenase (SDH). This is Succinate dehydrogenase subunit 4, mitochondrial from Oryza sativa subsp. japonica (Rice).